The sequence spans 131 residues: C-type natriuretic peptide 1 (131 aa).

The signal sequence occupies residues 1-22; it reads MLCPVLLCATLLLLTPFEVTEA. A propeptide spanning residues 23–109 is cleaved from the precursor; it reads RALHPSADAV…KRAEPDRSRR (87 aa). Cysteine 115 and cysteine 131 are disulfide-bonded.

The protein belongs to the natriuretic peptide family. In terms of tissue distribution, brain and spinal cord.

Its subcellular location is the secreted. In terms of biological role, exhibits natriuretic and vasodepressant activity. Has cGMP-stimulating activity. May help to regulate body fluid homeostasis in a variety of aquatic environments. This Oryzias latipes (Japanese rice fish) protein is C-type natriuretic peptide 1.